Reading from the N-terminus, the 77-residue chain is uncharacterized protein (77 aa).

This is an uncharacterized protein from Homo sapiens (Human).